The chain runs to 885 residues: MPIWGAISSNDLLNTYYTIEESQQIVEELLDFQMHNDQLEYFDSIEDAKKRFITDLYEILEKKHQKTNTFQIVSPPSAGKNFFIETVLAFYWNTGVIQNFNRYNNFPLMEAVNRRVNYWDEPNFEPDATETLKKLFAGTSLKATVKFQKEANVQKTPVIITANYDKFTKEVWDDRIIKYYWYPCPKLKEYNKRLHPFAWVYLIDKYVTDLLILIKMYNHRVMGNKICNLIKMYKYRVMVINIFSAFICLILIFLTNNYLGPGLYTCKSIDETTLSEAVVIWPSDKVTNHKEVFQADKQARDEFFTSFVHIGNVHSLIGGIGLGTKNLVEEHVLGKPLYGMGKRKSTEKDWAKIKRINRARAARRENQENQPDIREFGHVAGQNINADQEVNLADFPDFLQDFDAEAGPSGTQPVETAQQSPPTMSEDIQPMETVGATDTGGGAQVDPRTGGQAAGGSEMGAGGSANDGREDIFSGAPQPNQHHTLVYGKSYHFTITKWFTEFRHLATTNSGYYAQQRFKHIHGIPWERLLMYVSEGELLRMFRDYTSLKVEEVVCEVYSLGVRLPFVTSATTSSVANANAQYPIDVFHFDEAYETNYGINNVADIINKALGTEWKNATRPTAPVTTAWSEQFPNISASSTSRDINNPVIVDYSLPYFENNVPKDVGIYDYVDIKNGTTAYGKCWEKRFKPTNGLLYAESTLKGNVVTPLAAPTNIMTPIPGLENGYFMSNDQIRERRDLTTSVPPDALTATKLNQSASNNLNAFVDYMGYNYFGEQKAPQSMPKFMIGFVNIRNEDNSLLNAKWDILIKTRIRLTGLQSTREWVARTDRIPPQYFTSQYTQFRYPNINDTPLLRSLGTFKLPTKRPGMDSRIALGELQKQRKMNL.

Positions 404–477 are disordered; that stretch reads AEAGPSGTQP…GREDIFSGAP (74 aa). A compositionally biased stretch (polar residues) spans 409-423; it reads SGTQPVETAQQSPPT. Over residues 452-465 the composition is skewed to gly residues; it reads QAAGGSEMGAGGSA.

Belongs to the parvoviruses initiator protein NS1 family. In terms of assembly, homooligomer. Requires Mg(2+) as cofactor.

Its subcellular location is the host nucleus. The enzyme catalyses ATP + H2O = ADP + phosphate + H(+). Its function is as follows. Multifunctional protein which displays endonuclease and helicase activities required for initiating and directing viral DNA replication. Also plays a role in viral packaging and transactivation of several promoters. Binds site-specifically to 2-3 approximate tandem copies within the origins of replication (Ori), unwinds this hairpin region and nicks one DNA strand thereby initiating the rolling circle replication (RCR). In Bombyx mori densovirus (BmDNV), this protein is Initiator protein NS1.